The following is a 362-amino-acid chain: Methylthioribose-1-phosphate isomerase (362 aa).

Residues 53-55 (RGA), Arg-90, and Gln-201 each bind substrate. The active-site Proton donor is Asp-242. Substrate is bound at residue 252–253 (NK).

It belongs to the eIF-2B alpha/beta/delta subunits family. MtnA subfamily.

It carries out the reaction 5-(methylsulfanyl)-alpha-D-ribose 1-phosphate = 5-(methylsulfanyl)-D-ribulose 1-phosphate. It functions in the pathway amino-acid biosynthesis; L-methionine biosynthesis via salvage pathway; L-methionine from S-methyl-5-thio-alpha-D-ribose 1-phosphate: step 1/6. Functionally, catalyzes the interconversion of methylthioribose-1-phosphate (MTR-1-P) into methylthioribulose-1-phosphate (MTRu-1-P). The polypeptide is Methylthioribose-1-phosphate isomerase (Paramagnetospirillum magneticum (strain ATCC 700264 / AMB-1) (Magnetospirillum magneticum)).